The following is a 104-amino-acid chain: ATP-dependent Clp protease adapter protein ClpS (104 aa).

It belongs to the ClpS family. Binds to the N-terminal domain of the chaperone ClpA.

Its function is as follows. Involved in the modulation of the specificity of the ClpAP-mediated ATP-dependent protein degradation. In Oleidesulfovibrio alaskensis (strain ATCC BAA-1058 / DSM 17464 / G20) (Desulfovibrio alaskensis), this protein is ATP-dependent Clp protease adapter protein ClpS.